The chain runs to 475 residues: MGMWASLDALWEMPAEKRIFGAVLLFSWTVYLWETFLAQRQRRIYKTTTHVPPELGQIMDSETFEKSRLYQLDKSTFSFWSGLYSETEGTLILLFGGIPYLWRLSGRFCGYAGFGPEYEITQSLVFLLLATLFSALTGLPWSLYNTFVIEEKHGFNQQTLGFFMKDAIKKFVVTQCILLPVSSLLLYIIKIGGDYFFIYAWLFTLVVSLVLVTIYADYIAPLFDKFTPLPEGKLKEEIEVMAKSIDFPLTKVYVVEGSKRSSHSNAYFYGFFKNKRIVLFDTLLEEYSVLNKDIQEDSGMEPRNEEEGNSEEIKAKVKNKKQGCKNEEVLAVLGHELGHWKLGHTVKNIIISQMNSFLCFFLFAVLIGRKELFAAFGFYDSQPTLIGLLIIFQFIFSPYNEVLSFCLTVLSRRFEFQADAFAKKLGKAKDLYSALIKLNKDNLGFPVSDWLFSMWHYSHPPLLERLQALKTMKQH.

At 1-18 the chain is on the lumenal side; that stretch reads MGMWASLDALWEMPAEKR. A helical transmembrane segment spans residues 19–39; it reads IFGAVLLFSWTVYLWETFLAQ. Topologically, residues 40-81 are nuclear; the sequence is RQRRIYKTTTHVPPELGQIMDSETFEKSRLYQLDKSTFSFWS. Residues 82 to 102 form a helical membrane-spanning segment; sequence GLYSETEGTLILLFGGIPYLW. At 103–123 the chain is on the lumenal side; sequence RLSGRFCGYAGFGPEYEITQS. A helical transmembrane segment spans residues 124-144; the sequence is LVFLLLATLFSALTGLPWSLY. Over 145-170 the chain is Nuclear; the sequence is NTFVIEEKHGFNQQTLGFFMKDAIKK. A helical membrane pass occupies residues 171 to 191; that stretch reads FVVTQCILLPVSSLLLYIIKI. The Lumenal segment spans residues 192–195; that stretch reads GGDY. Residues 196–216 traverse the membrane as a helical segment; sequence FFIYAWLFTLVVSLVLVTIYA. The Nuclear segment spans residues 217-347; sequence DYIAPLFDKF…GHWKLGHTVK (131 aa). His-335 is a Zn(2+) binding site. The active site involves Glu-336. Zn(2+) is bound at residue His-339. The chain crosses the membrane as a helical span at residues 348–368; that stretch reads NIIISQMNSFLCFFLFAVLIG. The Lumenal portion of the chain corresponds to 369–382; the sequence is RKELFAAFGFYDSQ. Residues 383–405 traverse the membrane as a helical segment; that stretch reads PTLIGLLIIFQFIFSPYNEVLSF. The Nuclear portion of the chain corresponds to 406–475; that stretch reads CLTVLSRRFE…LQALKTMKQH (70 aa). Glu-415 contributes to the Zn(2+) binding site.

The protein belongs to the peptidase M48A family. Zn(2+) serves as cofactor. In terms of tissue distribution, widely expressed. High levels in kidney, prostate, testis and ovary.

The protein resides in the endoplasmic reticulum membrane. Its subcellular location is the nucleus inner membrane. It localises to the early endosome membrane. It is found in the late endosome membrane. It carries out the reaction Hydrolyzes the peptide bond -P2-(S-farnesyl or geranylgeranyl)C-P1'-P2'-P3'-COOH where P1' and P2' are amino acids with aliphatic side chains and P3' is any C-terminal residue.. In terms of biological role, transmembrane metalloprotease whose catalytic activity is critical for processing lamin A/LMNA on the inner nuclear membrane and clearing clogged translocons on the endoplasmic reticulum. Proteolytically removes the C-terminal three residues of farnesylated proteins. Also plays an antiviral role independently of its protease activity by restricting enveloped RNA and DNA viruses, including influenza A, Zika, Ebola, Sindbis, vesicular stomatitis, cowpox, and vaccinia. Mechanistically, controls IFITM antiviral pathway to hinder viruses from breaching the endosomal barrier by modulating membrane fluidity. This Homo sapiens (Human) protein is CAAX prenyl protease 1 homolog.